A 268-amino-acid polypeptide reads, in one-letter code: Myb-related protein 315 (268 aa).

HTH myb-type domains are found at residues 9–61 (KFGL…MNYL) and 62–116 (RPDL…KKKL). DNA-binding regions (H-T-H motif) lie at residues 37 to 61 (WRVIPKLAGLSRCGKSCRLRWMNYL) and 89 to 112 (WSKIALHIPGRTDNEIKNYWNTHI).

Expressed in roots, stems, leaves, seed pods and flowers. Strongest expression in the stem.

It is found in the nucleus. Transcription factor. The sequence is that of Myb-related protein 315 from Antirrhinum majus (Garden snapdragon).